The primary structure comprises 420 residues: Uteroferrin-associated basic protein 2 (420 aa).

The N-terminal stretch at 1–25 is a signal peptide; the sequence is MSHGKMPLVLSLVLILCGLFNSISC. Residues asparagine 225, asparagine 271, and asparagine 343 are each glycosylated (N-linked (GlcNAc...) asparagine).

Belongs to the serpin family. UTMP subfamily.

It is found in the secreted. The protein resides in the extracellular space. In Sus scrofa (Pig), this protein is Uteroferrin-associated basic protein 2.